Consider the following 173-residue polypeptide: uncharacterized protein (173 aa).

Residues 1 to 11 (MLCAKNKKDPK) are compositionally biased toward basic and acidic residues. A disordered region spans residues 1–173 (MLCAKNKKDP…EKMEKSEKAY (173 aa)). Over residues 17-41 (FSETSKVQNVQNTQPKPAAPSQMSI) the composition is skewed to polar residues. Basic and acidic residues-rich tracts occupy residues 56–109 (KSVE…KADN) and 120–144 (AKKE…EAKK). Basic residues predominate over residues 145 to 156 (KESRRQKKMRNK). Residues 157–173 (NSKEGSVEKMEKSEKAY) show a composition bias toward basic and acidic residues.

This is an uncharacterized protein from Caenorhabditis elegans.